The following is a 549-amino-acid chain: Cytochrome bc1 complex cytochrome b subunit (549 aa).

The helical transmembrane segment at 45–65 (FLLGEIALYSFVVLLITGVYL) threads the bilayer. Positions 114 and 128 each coordinate heme. A run of 3 helical transmembrane segments spans residues 118–138 (ALMF…TGAF), 146–166 (WVIG…GYSL), and 189–209 (VIGT…TILI). Residues His-216 and His-231 each contribute to the heme site. 5 helical membrane passes run 217–237 (ILLL…LVWF), 266–286 (SGAF…LLQI), 335–355 (PVWV…YPFL), 381–401 (IGAM…NDII), and 418–438 (IGMV…CIGL).

Belongs to the cytochrome b family. In terms of assembly, the cytochrome bc1 complex is composed of a cytochrome b (QcrB), the Rieske iron-sulfur protein (QcrA) and a diheme cytochrome c (QcrC) subunit. Requires heme as cofactor.

It localises to the cell membrane. It carries out the reaction a quinol + 2 Fe(III)-[cytochrome c](out) = a quinone + 2 Fe(II)-[cytochrome c](out) + 2 H(+)(out). Functionally, cytochrome b subunit of the cytochrome bc1 complex, an essential component of the respiratory electron transport chain required for ATP synthesis. The bc1 complex catalyzes the oxidation of ubiquinol and the reduction of cytochrome c in the respiratory chain. The bc1 complex operates through a Q-cycle mechanism that couples electron transfer to generation of the proton gradient that drives ATP synthesis. The cytochrome b subunit contains two ubiquinol reactive sites: the oxidation (QP) site and the reduction (QN) site. This Mycobacterium bovis (strain ATCC BAA-935 / AF2122/97) protein is Cytochrome bc1 complex cytochrome b subunit (qcrB).